The chain runs to 736 residues: Sulfate transporter (736 aa).

The tract at residues 1–28 (MSSESKEPHVLSPKDSFEGNDRYSPPSR) is disordered. Phosphoserine is present on residues Ser-12 and Ser-16. The next 2 helical transmembrane spans lie at 114 to 134 (VMSGLIVGILLVPQSIAYSLL) and 139 to 159 (PIYGLYTSFFASLIYFLLGTS). N-linked (GlcNAc...) asparagine glycosylation is found at Asn-201 and Asn-207. The next 6 helical transmembrane spans lie at 229-249 (FLAGIYQVAMGFFQVGFVSVY), 257-277 (GFVTGASFTILTSQAKYLLGL), 380-400 (LIPSVAVDAIAISIIGFAITV), 422-442 (AIGFCNIIPSFFHCFTTSAAL), 457-477 (LSGVMTALVLLLVLLVIAPLF), and 526-546 (LISTELGLLIGVCFSMFCVIL). One can recognise an STAS domain in the interval 570–721 (AYKNLQARPG…YSVYEAMAFA (152 aa)).

It belongs to the SLC26A/SulP transporter (TC 2.A.53) family. Post-translationally, N-glycosylated.

It localises to the cell membrane. It is found in the apical cell membrane. It carries out the reaction oxalate(in) + sulfate(out) = oxalate(out) + sulfate(in). The catalysed reaction is sulfate(out) + 2 chloride(in) = sulfate(in) + 2 chloride(out). It catalyses the reaction oxalate(out) + 2 chloride(in) = oxalate(in) + 2 chloride(out). The enzyme catalyses bromide(in) + chloride(out) = bromide(out) + chloride(in). It carries out the reaction nitrate(in) + chloride(out) = nitrate(out) + chloride(in). The catalysed reaction is iodide(in) + chloride(out) = iodide(out) + chloride(in). Its function is as follows. Sulfate transporter which mediates sulfate uptake into chondrocytes in order to maintain adequate sulfation of proteoglycans which is needed for cartilage development. Mediates electroneutral anion exchange of sulfate ions for oxalate ions, sulfate and oxalate ions for chloride and/or hydroxyl ions and chloride ions for bromide, iodide and nitrate ions. The coupling of sulfate transport to both hydroxyl and chloride ions likely serves to ensure transport at both acidic pH when most sulfate uptake is mediated by sulfate-hydroxide exchange and alkaline pH when most sulfate uptake is mediated by sulfate-chloride exchange. Essential for chondrocyte proliferation, differentiation and cell size expansion. The sequence is that of Sulfate transporter (SLC26A2) from Equus caballus (Horse).